Here is a 381-residue protein sequence, read N- to C-terminus: Lysophosphatidylserine lipase ABHD12 (381 aa).

Over 1–58 (MRKRNESVTVEHERAAAAPAPLDKGCSLRHSLRLPAADTGMKRPLGRRHGLWFRLRRL) the chain is Cytoplasmic. A helical membrane pass occupies residues 59 to 79 (IIWLLGVYIAIPFLVKLCPAI). Over 80 to 381 (QAKLVFLNFV…LGIPEHEHHH (302 aa)) the chain is Extracellular. The N-linked (GlcNAc...) asparagine glycan is linked to asparagine 106. Catalysis depends on serine 229, which acts as the Nucleophile. Active-site charge relay system residues include aspartate 316 and histidine 355.

Belongs to the serine esterase family.

The protein localises to the endoplasmic reticulum membrane. It catalyses the reaction 1-(9Z-octadecenoyl)-sn-glycero-3-phospho-L-serine + H2O = sn-glycero-3-phospho-L-serine + (9Z)-octadecenoate + H(+). The enzyme catalyses 1-(9Z-octadecenoyl)-sn-glycero-3-phospho-(1'-sn-glycerol) + H2O = sn-glycero-3-phospho-(1'-sn-glycerol) + (9Z)-octadecenoate + H(+). The catalysed reaction is 1-(9Z-octadecenoyl)-sn-glycero-3-phospho-(1D-myo-inositol) + H2O = sn-glycero-3-phospho-1D-myo-inositol + (9Z)-octadecenoate + H(+). It carries out the reaction 1-(9Z-octadecenoyl)-sn-glycero-3-phosphoethanolamine + H2O = sn-glycero-3-phosphoethanolamine + (9Z)-octadecenoate + H(+). It catalyses the reaction 1-(9Z-octadecenoyl)-sn-glycero-3-phosphocholine + H2O = 1-(9Z-octadecenoyl)-sn-glycerol + phosphocholine + H(+). The enzyme catalyses 2-(9Z-octadecenoyl)-glycerol + H2O = glycerol + (9Z)-octadecenoate + H(+). The catalysed reaction is 1-hexadecanoyl-sn-glycero-3-phospho-L-serine + H2O = sn-glycero-3-phospho-L-serine + hexadecanoate + H(+). It carries out the reaction 2-(5Z,8Z,11Z,14Z-eicosatetraenoyl)-glycerol + H2O = glycerol + (5Z,8Z,11Z,14Z)-eicosatetraenoate + H(+). It catalyses the reaction Hydrolyzes glycerol monoesters of long-chain fatty acids.. The enzyme catalyses 1-decanoylglycerol + H2O = decanoate + glycerol + H(+). The catalysed reaction is 1-dodecanoylglycerol + H2O = dodecanoate + glycerol + H(+). It carries out the reaction 1-tetradecanoylglycerol + H2O = tetradecanoate + glycerol + H(+). It catalyses the reaction 2-hexadecanoylglycerol + H2O = glycerol + hexadecanoate + H(+). The enzyme catalyses 1-(9Z-octadecenoyl)-glycerol + H2O = glycerol + (9Z)-octadecenoate + H(+). The catalysed reaction is 2-(9Z,12Z-octadecadienoyl)-glycerol + H2O = (9Z,12Z)-octadecadienoate + glycerol + H(+). It carries out the reaction 1-(5Z,8Z,11Z,14Z-eicosatetraenoyl)-glycerol + H2O = glycerol + (5Z,8Z,11Z,14Z)-eicosatetraenoate + H(+). It catalyses the reaction 1-(9Z,12Z-octadecadienoyl)-glycerol + H2O = (9Z,12Z)-octadecadienoate + glycerol + H(+). The enzyme catalyses 1-hexadecanoylglycerol + H2O = glycerol + hexadecanoate + H(+). The catalysed reaction is 1-octadecanoylglycerol + H2O = octadecanoate + glycerol + H(+). It carries out the reaction 1-octadecanoyl-2-(9,10-epoxyoctadecanoyl)-sn-glycero-3-phospho-L-serine + H2O = 9,10-epoxyoctadecanoate + 1-octadecanoyl-sn-glycero-3-phosphoserine + H(+). It catalyses the reaction 1-octadecanoyl-2-(10-hydroxyoctadecanoyl)-sn-glycero-3-phospho-L-serine + H2O = 1-octadecanoyl-sn-glycero-3-phosphoserine + 10-hydroxyoctadecanoate + H(+). The enzyme catalyses 1-hexadecanoyl-2-(10-hydroxyoctadecanoyl)-sn-glycero-3-phospho-L-serine + H2O = 10-hydroxyoctadecanoate + 1-hexadecanoyl-sn-glycero-3-phospho-L-serine + H(+). Lysophosphatidylserine (LPS) lipase that mediates the hydrolysis of lysophosphatidylserine, a class of signaling lipids that regulates immunological and neurological processes. Represents a major lysophosphatidylserine lipase in the brain, thereby playing a key role in the central nervous system. Also able to hydrolyze oxidized phosphatidylserine; oxidized phosphatidylserine is produced in response to severe inflammatory stress and constitutes a proapoptotic 'eat me' signal. Also has monoacylglycerol (MAG) lipase activity: hydrolyzes 2-arachidonoylglycerol (2-AG), thereby acting as a regulator of endocannabinoid signaling pathways. Has a strong preference for very-long-chain lipid substrates; substrate specificity is likely due to improved catalysis and not improved substrate binding. This Gallus gallus (Chicken) protein is Lysophosphatidylserine lipase ABHD12.